An 87-amino-acid polypeptide reads, in one-letter code: Large ribosomal subunit protein bL27 (87 aa).

Residues 1–23 are disordered; the sequence is MAHKKGTGSTRNGRDSNAQRLGV. The span at 7 to 19 shows a compositional bias: polar residues; the sequence is TGSTRNGRDSNAQ.

Belongs to the bacterial ribosomal protein bL27 family.

In Synechocystis sp. (strain ATCC 27184 / PCC 6803 / Kazusa), this protein is Large ribosomal subunit protein bL27 (rpmA).